Reading from the N-terminus, the 471-residue chain is Alkaline phosphatase (471 aa).

Residues 1-21 form the signal peptide; it reads MKQSTIALALLPLLFTPVTKA. A Mg(2+)-binding site is contributed by Asp73. A Zn(2+)-binding site is contributed by Asp73. The Phosphoserine intermediate role is filled by Ser124. The Mg(2+) site is built by Asp175 and Thr177. Disulfide bonds link Cys190–Cys200 and Cys308–Cys358. Position 344 (Glu344) interacts with Mg(2+). 5 residues coordinate Zn(2+): Asp349, His353, Asp391, His392, and His434.

Belongs to the alkaline phosphatase family. In terms of assembly, isozymes 1 and 3 are a dimer of identical chains, isozyme 2 is a dimer of heterogeneous chains, one of each of the subunits from isozymes 1 and 3. Mg(2+) serves as cofactor. Requires Zn(2+) as cofactor.

Its subcellular location is the periplasm. The catalysed reaction is a phosphate monoester + H2O = an alcohol + phosphate. This is Alkaline phosphatase (phoA) from Escherichia coli (strain K12).